The sequence spans 114 residues: UPF0145 protein SSO1976 (114 aa).

Belongs to the UPF0145 family.

The sequence is that of UPF0145 protein SSO1976 from Saccharolobus solfataricus (strain ATCC 35092 / DSM 1617 / JCM 11322 / P2) (Sulfolobus solfataricus).